We begin with the raw amino-acid sequence, 86 residues long: Small ribosomal subunit protein bS16 (86 aa).

This sequence belongs to the bacterial ribosomal protein bS16 family.

This is Small ribosomal subunit protein bS16 from Xanthomonas campestris pv. campestris (strain 8004).